The following is a 304-amino-acid chain: Protein phosphatase PTC7 homolog (304 aa).

The transit peptide at 1–68 (MFSVLSYGRL…GDDACFVARH (68 aa)) directs the protein to the mitochondrion. The 231-residue stretch at 69–299 (RSADVLGVAD…DDITVLLSIV (231 aa)) folds into the PPM-type phosphatase domain. Mn(2+) contacts are provided by Asp78, Gly79, and Asp223.

The protein belongs to the PP2C family. As to quaternary structure, interacts with FBXL4, BNIP3 and NIX; these interactions are important for ubiquitination and degradation of BNIP3 and NIX. It depends on Mg(2+) as a cofactor. The cofactor is Mn(2+). As to expression, expressed in keratinocytes (at protein level).

It localises to the mitochondrion matrix. It carries out the reaction O-phospho-L-seryl-[protein] + H2O = L-seryl-[protein] + phosphate. The enzyme catalyses O-phospho-L-threonyl-[protein] + H2O = L-threonyl-[protein] + phosphate. Inhibited by sodium orthovanadate. Its function is as follows. Protein phosphatase that plays an essential role in mitochondrial metabolism and biogenesis. Positively regulates biosynthesis of the ubiquinone, coenzyme Q. Dephosphorylates the ubiquinone biosynthesis protein COQ7 which is likely to lead to its activation. Serves as a crucial sensor for mitophagy, though the underlying mechanism remains ambiguous. May dephosphorylate BNIP3 and NIX and thereby directly regulates mitophagy receptor function and stability. Alternatively, promotes SCF-FBXL4-dependent ubiquitination and degradation of BNIP3 and NIX independently of its catalytic activity to restrain mitophagy. This Homo sapiens (Human) protein is Protein phosphatase PTC7 homolog (PPTC7).